A 446-amino-acid polypeptide reads, in one-letter code: Chromosomal replication initiator protein DnaA (446 aa).

The segment at 1–81 (MENISDLWNS…AKLAIRFIIP (81 aa)) is domain I, interacts with DnaA modulators. Positions 81-109 (PQSQAEEDIDLPPVKRNPAQDDSAHLPQS) are domain II. A domain III, AAA+ region region spans residues 110–326 (MLNPKYTFDT…GALIRVVAYS (217 aa)). ATP-binding residues include G154, G156, K157, and T158. The tract at residues 327 to 446 (SLINKDINAD…QVEEINGILK (120 aa)) is domain IV, binds dsDNA.

The protein belongs to the DnaA family. In terms of assembly, oligomerizes as a right-handed, spiral filament on DNA at oriC.

It is found in the cytoplasm. Plays an essential role in the initiation and regulation of chromosomal replication. ATP-DnaA binds to the origin of replication (oriC) to initiate formation of the DNA replication initiation complex once per cell cycle. Binds the DnaA box (a 9 base pair repeat at the origin) and separates the double-stranded (ds)DNA. Forms a right-handed helical filament on oriC DNA; dsDNA binds to the exterior of the filament while single-stranded (ss)DNA is stabiized in the filament's interior. The ATP-DnaA-oriC complex binds and stabilizes one strand of the AT-rich DNA unwinding element (DUE), permitting loading of DNA polymerase. After initiation quickly degrades to an ADP-DnaA complex that is not apt for DNA replication. Binds acidic phospholipids. This is Chromosomal replication initiator protein DnaA from Bacillus cereus (strain G9842).